The chain runs to 223 residues: Ribose-5-phosphate isomerase A (223 aa).

Substrate is bound by residues 29–32, 82–85, and 95–98; these read TGST, DGAD, and KGGG. Glu-104 functions as the Proton acceptor in the catalytic mechanism. Lys-122 contributes to the substrate binding site.

This sequence belongs to the ribose 5-phosphate isomerase family. Homodimer.

The catalysed reaction is aldehydo-D-ribose 5-phosphate = D-ribulose 5-phosphate. The protein operates within carbohydrate degradation; pentose phosphate pathway; D-ribose 5-phosphate from D-ribulose 5-phosphate (non-oxidative stage): step 1/1. Catalyzes the reversible conversion of ribose-5-phosphate to ribulose 5-phosphate. The polypeptide is Ribose-5-phosphate isomerase A (Neisseria meningitidis serogroup C / serotype 2a (strain ATCC 700532 / DSM 15464 / FAM18)).